The primary structure comprises 188 residues: MASTNDLKNGLVLNLDGQLWSVVNFQHVKPGKGGAFVRTTLKNVLSGKVVDKTFNAGVKVDTANVDRREMTYLYNDGTDYVFMDPDTYDQVGVAASVVGDAADYMLENSQVVVARHDDNPLYVELPASVELDIQHTDPGVQGDRSTGGTKPATLETGAEIQVPLFLNTGDKVKVDPRDGRYLGRVSTK.

Belongs to the elongation factor P family.

It localises to the cytoplasm. The protein operates within protein biosynthesis; polypeptide chain elongation. Its function is as follows. Involved in peptide bond synthesis. Stimulates efficient translation and peptide-bond synthesis on native or reconstituted 70S ribosomes in vitro. Probably functions indirectly by altering the affinity of the ribosome for aminoacyl-tRNA, thus increasing their reactivity as acceptors for peptidyl transferase. This is Elongation factor P from Saccharopolyspora erythraea (strain ATCC 11635 / DSM 40517 / JCM 4748 / NBRC 13426 / NCIMB 8594 / NRRL 2338).